Here is a 163-residue protein sequence, read N- to C-terminus: Transcription antitermination protein NusB (163 aa).

The segment at 1–21 (MTTFLSDSEHPQDVKAPPKSA) is disordered.

Belongs to the NusB family.

Its function is as follows. Involved in transcription antitermination. Required for transcription of ribosomal RNA (rRNA) genes. Binds specifically to the boxA antiterminator sequence of the ribosomal RNA (rrn) operons. This is Transcription antitermination protein NusB from Dechloromonas aromatica (strain RCB).